A 170-amino-acid polypeptide reads, in one-letter code: MSEHNSDIVHPPTKDCITRLKREFQEISKNPIENILVTPSPSNILEWHYVILGASNTPYEGGVYYGQLIFKYNYPLSPPSILMTTPSGRFETQKRLCLSISDYHPESWSPSWSTSSILLGLLSFMSDNEVTAGSIVTTNDEKRILATKSMDFNKKNKTFCELFPYLAMDE.

In terms of domain architecture, UBC core spans 15 to 165; that stretch reads DCITRLKREF…NKTFCELFPY (151 aa). The active-site Glycyl thioester intermediate is cysteine 97.

Belongs to the ubiquitin-conjugating enzyme family.

The enzyme catalyses S-ubiquitinyl-[E1 ubiquitin-activating enzyme]-L-cysteine + [E2 ubiquitin-conjugating enzyme]-L-cysteine = [E1 ubiquitin-activating enzyme]-L-cysteine + S-ubiquitinyl-[E2 ubiquitin-conjugating enzyme]-L-cysteine.. Its pathway is protein modification; protein ubiquitination. Functionally, catalyzes the covalent attachment of ubiquitin to other proteins. The polypeptide is Ubiquitin-conjugating enzyme E2 J2-like (Dictyostelium discoideum (Social amoeba)).